Reading from the N-terminus, the 206-residue chain is Interleukin-24 (206 aa).

A signal peptide spans Met-1–Gly-51. A disulfide bond links Cys-59 and Cys-106. N-linked (GlcNAc...) asparagine glycans are attached at residues Asn-85 and Asn-99. Lys-122 participates in a covalent cross-link: Glycyl lysine isopeptide (Lys-Gly) (interchain with G-Cter in ubiquitin). Asn-126 carries N-linked (GlcNAc...) asparagine glycosylation.

The protein belongs to the IL-10 family. Post-translationally, glycosylated. Ubiquitination at Lys-122 promotes proteasomal degradation. As to expression, up-regulated in melanoma cells induced to terminally differentiate.

It is found in the secreted. Functionally, multifunctional cytokine mainly produced by T-cells that plays a regulatory role in immune response, tissue homeostasis, host defense, and oncogenesis. Possesses antiviral functions and induces the type I interferon response during influenza infection. Signals through two receptor complexes IL20RA/IL20RB or IL20RB/IL22RA1. In turn, stimulates the JAK1-STAT3 and MAPK pathways and promotes the secretion of pro-inflammatory mediators including IL8 and MMP1. Intracellularly, maintains endoplasmic reticulum homeostasis by restricting the eIF2alpha-CHOP pathway-mediated stress signal. In addition, acts as a quality control mechanism for the ubiquitin proteasome system by alerting the cell to proteasome dysfunction through activation of PKR/EIF2AK2. This is Interleukin-24 (IL24) from Homo sapiens (Human).